We begin with the raw amino-acid sequence, 316 residues long: MGAVIDDSMPGPGADATGTGPSDARTERETRKLEKRLCRAVGKAIDDFHMIEAGDKVMVCMSGGKDSYTLLDILLKLRARAPIAFDLVAVNLDQKQPGFPAHVLPGYLASAGVPYHIETEDTYGIVKRLIPEGKTTCSLCSRLRRGILYRVASELGCTKIALGHHRDDILQTLLLNMFFGGKMKSMPPKLVSDDGQHVVIRPLAYVAEKDTARWAAQRNFPIIACNLCGSQQNLQRQQVGQMLREWEKKLPGRVENMFNALQNIVPSHLLDARLYDFKNARATGLASADGDKAFDPQELATPAEQVVQIVPTRRSS.

The tract at residues 1–31 (MGAVIDDSMPGPGADATGTGPSDARTERETR) is disordered. Residues 10 to 21 (PGPGADATGTGP) show a composition bias toward low complexity. The PP-loop motif signature appears at 62-67 (SGGKDS). The [4Fe-4S] cluster site is built by Cys137, Cys140, and Cys228.

Belongs to the TtcA family. As to quaternary structure, homodimer. Mg(2+) serves as cofactor. Requires [4Fe-4S] cluster as cofactor.

It is found in the cytoplasm. The enzyme catalyses cytidine(32) in tRNA + S-sulfanyl-L-cysteinyl-[cysteine desulfurase] + AH2 + ATP = 2-thiocytidine(32) in tRNA + L-cysteinyl-[cysteine desulfurase] + A + AMP + diphosphate + H(+). The protein operates within tRNA modification. Catalyzes the ATP-dependent 2-thiolation of cytidine in position 32 of tRNA, to form 2-thiocytidine (s(2)C32). The sulfur atoms are provided by the cysteine/cysteine desulfurase (IscS) system. This Verminephrobacter eiseniae (strain EF01-2) protein is tRNA-cytidine(32) 2-sulfurtransferase.